Consider the following 983-residue polypeptide: Bifunctional glutamine synthetase adenylyltransferase/adenylyl-removing enzyme (983 aa).

The segment at 1–468 (MTVENAKALF…KQYAALFEQA (468 aa)) is adenylyl removase. Positions 473 to 983 (AASGNLVFTG…FDKLVGHGAD (511 aa)) are adenylyl transferase.

The protein belongs to the GlnE family. Mg(2+) is required as a cofactor.

It carries out the reaction [glutamine synthetase]-O(4)-(5'-adenylyl)-L-tyrosine + phosphate = [glutamine synthetase]-L-tyrosine + ADP. The catalysed reaction is [glutamine synthetase]-L-tyrosine + ATP = [glutamine synthetase]-O(4)-(5'-adenylyl)-L-tyrosine + diphosphate. Functionally, involved in the regulation of glutamine synthetase GlnA, a key enzyme in the process to assimilate ammonia. When cellular nitrogen levels are high, the C-terminal adenylyl transferase (AT) inactivates GlnA by covalent transfer of an adenylyl group from ATP to specific tyrosine residue of GlnA, thus reducing its activity. Conversely, when nitrogen levels are low, the N-terminal adenylyl removase (AR) activates GlnA by removing the adenylyl group by phosphorolysis, increasing its activity. The regulatory region of GlnE binds the signal transduction protein PII (GlnB) which indicates the nitrogen status of the cell. The chain is Bifunctional glutamine synthetase adenylyltransferase/adenylyl-removing enzyme from Brucella melitensis biotype 1 (strain ATCC 23456 / CCUG 17765 / NCTC 10094 / 16M).